Consider the following 261-residue polypeptide: Putative [LysW]-aminoadipate/[LysW]-glutamate kinase (261 aa).

Substrate contacts are provided by residues 35–36 (GG), arginine 62, and asparagine 162.

This sequence belongs to the acetylglutamate kinase family. LysZ subfamily.

It is found in the cytoplasm. It carries out the reaction [amino-group carrier protein]-C-terminal-N-(1,4-dicarboxybutan-1-yl)-L-glutamine + ATP = [amino-group carrier protein]-C-terminal-N-(1-carboxy-5-phosphooxy-5-oxopentan-1-yl)-L-glutamine + ADP. The enzyme catalyses [amino-group carrier protein]-C-terminal-gamma-(L-glutamyl)-L-glutamate + ATP = [amino-group carrier protein]-C-terminal-gamma-(5-phospho-L-glutamyl)-L-glutamate + ADP. It participates in amino-acid biosynthesis; L-lysine biosynthesis via AAA pathway; L-lysine from L-alpha-aminoadipate (Thermus route): step 2/5. It functions in the pathway amino-acid biosynthesis; L-arginine biosynthesis. In terms of biological role, involved in both the arginine and lysine biosynthetic pathways. Phosphorylates the LysW-bound precursors glutamate (for arginine biosynthesis), respectively alpha-aminoadipate (for lysine biosynthesis). The polypeptide is Putative [LysW]-aminoadipate/[LysW]-glutamate kinase (Pyrobaculum aerophilum (strain ATCC 51768 / DSM 7523 / JCM 9630 / CIP 104966 / NBRC 100827 / IM2)).